The primary structure comprises 55 residues: Small integral membrane protein 27 (55 aa).

Residues 11–31 (WIYSVLLLAIVLISWGCIIYA) traverse the membrane as a helical segment.

It localises to the membrane. The sequence is that of Small integral membrane protein 27 from Homo sapiens (Human).